A 184-amino-acid chain; its full sequence is uncharacterized protein (184 aa).

It belongs to the PhzF family.

The protein resides in the cytoplasm. It localises to the nucleus. This is an uncharacterized protein from Schizosaccharomyces pombe (strain 972 / ATCC 24843) (Fission yeast).